The following is an 828-amino-acid chain: Glycerol-3-phosphate acyltransferase (828 aa).

The HXXXXD motif signature appears at 309 to 314 (CHRSHI).

This sequence belongs to the GPAT/DAPAT family.

It localises to the cell inner membrane. It catalyses the reaction sn-glycerol 3-phosphate + an acyl-CoA = a 1-acyl-sn-glycero-3-phosphate + CoA. It functions in the pathway phospholipid metabolism; CDP-diacylglycerol biosynthesis; CDP-diacylglycerol from sn-glycerol 3-phosphate: step 1/3. This chain is Glycerol-3-phosphate acyltransferase, found in Pseudomonas entomophila (strain L48).